The primary structure comprises 354 residues: Annexin A13 (354 aa).

Annexin repeat units follow at residues 26 to 97, 98 to 177, 203 to 275, and 279 to 350; these read NDPN…MLLT, DTDK…ALLQ, NLVE…LTLN, and NRPK…ALIG. Residues Met-39, Gly-41, Gly-43, Thr-44, Glu-46, Glu-83, Met-111, Gly-113, Gly-115, Glu-118, Asp-163, Asp-265, Met-292, Gly-294, Leu-295, Gly-296, and Glu-336 each coordinate Ca(2+).

This sequence belongs to the annexin family. As to quaternary structure, homodimer.

The protein localises to the tegument. It localises to the secreted. The protein resides in the extracellular exosome. Its subcellular location is the host cell. Functionally, involved in reproduction of the worm. Involved in host-parasite interaction. Delivered into the host cell by means of parasite exosomes. Binds to acidic phospholipid membranes in a calcium-dependent manner in vitro. Causes aggregation of liposomes in the presence of calcium, but not in its absence. Likely to promote membrane fusion. May provide structural integrity within the tegument. The protein is Annexin A13 of Schistosoma japonicum (Blood fluke).